A 570-amino-acid chain; its full sequence is Protein HEATR9 (570 aa).

The sequence is that of Protein HEATR9 (HEATR9) from Homo sapiens (Human).